Here is a 119-residue protein sequence, read N- to C-terminus: Large ribosomal subunit protein bL20 (119 aa).

This sequence belongs to the bacterial ribosomal protein bL20 family.

Its function is as follows. Binds directly to 23S ribosomal RNA and is necessary for the in vitro assembly process of the 50S ribosomal subunit. It is not involved in the protein synthesizing functions of that subunit. The chain is Large ribosomal subunit protein bL20 from Syntrophus aciditrophicus (strain SB).